Here is a 354-residue protein sequence, read N- to C-terminus: E2F transcription factor-like E2FF (354 aa).

A DNA-binding region spans residues 21 to 86; it reads RKEKSLGVLV…RGKNQYSWKG (66 aa). A disordered region spans residues 104–143; it reads ERLGYSSSNNSDKVSNGCEREEPLTLTPDDQENSSSSKMD. A compositionally biased stretch (polar residues) spans 108-117; that stretch reads YSSSNNSDKV. Residues 145–225 mediate DNA binding; it reads KKEKSLWLLA…TRKPAYRWLG (81 aa).

The protein belongs to the E2F/DP family. As to expression, high expression in young cotyledons and leaves, hypocotyls, shoot apical meristem, roots and mature pollen grains, moderate in developing trichomes, flowers and at early stages of developing anthers, and barely detectable in mature leaves. Not detected in primary root meristem, emerging lateral roots, pistils, developing embryos and siliques.

It localises to the nucleus. Its subcellular location is the cytoplasm. Its function is as follows. Inhibitor of E2F-dependent activation of gene expression. Binds specifically the E2 recognition site without interacting with DP proteins and prevents transcription activation by E2F/DP heterodimers. Does not bind retinoblastoma-related proteins. Acts as a growth regulator but is not associated with changes in the expression of cell cycle marker genes or in nuclear ploidy levels. Has no effect on cell proliferation, but may repress cell wall biosynthesis genes during cell elongation in differentiated cells. This chain is E2F transcription factor-like E2FF (E2FF), found in Arabidopsis thaliana (Mouse-ear cress).